The following is a 462-amino-acid chain: MALQNEKNSRYLLRDWKPENPAFWENKGKHIARRNLWISVSCLLLAFCVWMLFSAVTVNLNKIGFNFTTDQLFLLTALPSVSGALLRVPYSFMVPIFGGRRWTVFSTAILIIPCVWLGIAVQNPNTPFGIFIVIALLCGFAGANFASSMGNISFFFPKAKQGSALGINGGLGNLGVSVMQLVAPLVIFVPVFAFLGVNGVPQADGSVMSLANAAWIWVPLLAIATIAAWSGMNDIASSRASIADQLPVLQRLHLWLLSLLYLATFGSFIGFSAGFAMLAKTQFPDVNILRLAFFGPFIGAIARSVGGAISDKFGGVRVTLINFIFMAIFSALLFLTLPGTGSGNFIAFYAVFMGLFLTAGLGSGSTFQMIAVIFRQITIYRVKMKGGSDEQAHKEAVTETAAALGFISAIGAVGGFFIPQAFGMSLNMTGSPVGAMKVFLIFYIVCVLLTWLVYGRRKFSQK.

Topologically, residues 1-35 (MALQNEKNSRYLLRDWKPENPAFWENKGKHIARRN) are cytoplasmic. Residues 36-56 (LWISVSCLLLAFCVWMLFSAV) form a helical membrane-spanning segment. The Periplasmic portion of the chain corresponds to 57 to 76 (TVNLNKIGFNFTTDQLFLLT). The helical transmembrane segment at 77–97 (ALPSVSGALLRVPYSFMVPIF) threads the bilayer. Topologically, residues 98-101 (GGRR) are cytoplasmic. A helical transmembrane segment spans residues 102 to 122 (WTVFSTAILIIPCVWLGIAVQ). Topologically, residues 123–125 (NPN) are periplasmic. A helical membrane pass occupies residues 126 to 146 (TPFGIFIVIALLCGFAGANFA). The Cytoplasmic segment spans residues 147–180 (SSMGNISFFFPKAKQGSALGINGGLGNLGVSVMQ). A helical membrane pass occupies residues 181–201 (LVAPLVIFVPVFAFLGVNGVP). The Periplasmic portion of the chain corresponds to 202 to 206 (QADGS). A helical membrane pass occupies residues 207 to 227 (VMSLANAAWIWVPLLAIATIA). Residues 228 to 258 (AWSGMNDIASSRASIADQLPVLQRLHLWLLS) lie on the Cytoplasmic side of the membrane. Residues 259–279 (LLYLATFGSFIGFSAGFAMLA) form a helical membrane-spanning segment. Residues 280 to 287 (KTQFPDVN) are Periplasmic-facing. The chain crosses the membrane as a helical span at residues 288-308 (ILRLAFFGPFIGAIARSVGGA). Residues 309-317 (ISDKFGGVR) lie on the Cytoplasmic side of the membrane. The helical transmembrane segment at 318-338 (VTLINFIFMAIFSALLFLTLP) threads the bilayer. At 339–344 (GTGSGN) the chain is on the periplasmic side. The chain crosses the membrane as a helical span at residues 345–365 (FIAFYAVFMGLFLTAGLGSGS). Residues 366-401 (TFQMIAVIFRQITIYRVKMKGGSDEQAHKEAVTETA) lie on the Cytoplasmic side of the membrane. The helical transmembrane segment at 402 to 422 (AALGFISAIGAVGGFFIPQAF) threads the bilayer. The Periplasmic segment spans residues 423–432 (GMSLNMTGSP). The helical transmembrane segment at 433–453 (VGAMKVFLIFYIVCVLLTWLV) threads the bilayer. The Cytoplasmic portion of the chain corresponds to 454–462 (YGRRKFSQK).

Belongs to the major facilitator superfamily. Nitrate/nitrite porter (TC 2.A.1.8) family.

It localises to the cell inner membrane. Its function is as follows. Catalyzes nitrate uptake, nitrite uptake and nitrite export across the cytoplasmic membrane. May function as a nitrate/H(+) and nitrite/H(+) channel. Could confer a selective advantage during severe nutrient starvation or slow growth. The polypeptide is Nitrate/nitrite transporter NarU (narU) (Escherichia coli (strain K12)).